A 37-amino-acid polypeptide reads, in one-letter code: Large ribosomal subunit protein bL36 (37 aa).

It belongs to the bacterial ribosomal protein bL36 family.

This is Large ribosomal subunit protein bL36 from Variovorax paradoxus (strain S110).